The following is a 487-amino-acid chain: Serine/threonine-protein kinase 4 (487 aa).

Residue M1 is modified to N-acetylmethionine. T3 carries the post-translational modification Phosphothreonine. The Protein kinase domain maps to 30-281 (FDVLEKLGEG…ATQLLQHPFV (252 aa)). Residues 36–44 (LGEGSYGSV) and K59 contribute to the ATP site. Catalysis depends on D149, which acts as the Proton acceptor. T183 is modified (phosphothreonine; by autocatalysis). S265 carries the phosphoserine modification. Positions 290-310 (LRDLINEAMDVKLKRQESQQR) form a coiled coil. Residues 303–312 (KRQESQQREV) are compositionally biased toward basic and acidic residues. The disordered stretch occupies residues 303 to 332 (KRQESQQREVDQDDEENSEEDEMDSGTMVR). Residues 313-326 (DQDDEENSEEDEMD) are compositionally biased toward acidic residues. Phosphoserine is present on S320. Phosphothreonine occurs at positions 340 and 367. T387 bears the Phosphothreonine; by PKB/AKT1 mark. A phosphoserine mark is found at S410 and S414. Residue Y433 is modified to Phosphotyrosine. An SARAH domain is found at 433–480 (YEFLKSWTVEDLQKRLLALDPMMEQEIEEIRQKYQSKRQPILDAIEAK).

It belongs to the protein kinase superfamily. STE Ser/Thr protein kinase family. STE20 subfamily. In terms of assembly, homodimer; mediated via the coiled-coil region. Interacts with NORE1, which inhibits autoactivation. Interacts with and stabilizes SAV1. Interacts with RASSF1. Interacts with FOXO3. Interacts with RASSF2 (via SARAH domain). Interacts with AR, PKB/AKT1, TNNI3 and SIRT1. Interacts with DLG5 (via PDZ domain 3). Interacts with MARK3 and SCRIB in the presence of DLG5. The cofactor is Mg(2+). Autophosphorylated on serine and threonine residues. Phosphorylation at Thr-387 by PKB/AKT1, leads to inhibition of its: kinase activity, nuclear translocation and autophosphorylation at Thr-183. It also diminishes its cleavage by caspases and its ability to phosphorylate FOXO3. In terms of processing, proteolytically cleaved by caspase-3 during apoptosis at Asp-326 and Asp-349 resulting in a 37 kDa or a 39 kDa subunit respectively. The 39 kDa subunit is further cleaved into the 37 kDa form. Proteolytic cleavage results in kinase activation and nuclear translocation of the truncated form (MST1/N). It is less likely that cleavage at Asp-349 is a prerequisite for activation as this site is not conserved in the murine ortholog.

It localises to the cytoplasm. It is found in the nucleus. The catalysed reaction is L-seryl-[protein] + ATP = O-phospho-L-seryl-[protein] + ADP + H(+). It carries out the reaction L-threonyl-[protein] + ATP = O-phospho-L-threonyl-[protein] + ADP + H(+). Its activity is regulated as follows. Inhibited by the C-terminal non-catalytic region. Activated by caspase-cleavage. Full activation also requires homodimerization and autophosphorylation of Thr-183. Activated by RASSF1 which acts by preventing its dephosphorylation. In terms of biological role, stress-activated, pro-apoptotic kinase which, following caspase-cleavage, enters the nucleus and induces chromatin condensation followed by internucleosomal DNA fragmentation. Key component of the Hippo signaling pathway which plays a pivotal role in organ size control and tumor suppression by restricting proliferation and promoting apoptosis. The core of this pathway is composed of a kinase cascade wherein STK3/MST2 and STK4/MST1, in complex with its regulatory protein SAV1, phosphorylates and activates LATS1/2 in complex with its regulatory protein MOB1, which in turn phosphorylates and inactivates YAP1 oncoprotein and WWTR1/TAZ. Phosphorylation of YAP1 by LATS2 inhibits its translocation into the nucleus to regulate cellular genes important for cell proliferation, cell death, and cell migration. STK3/MST2 and STK4/MST1 are required to repress proliferation of mature hepatocytes, to prevent activation of facultative adult liver stem cells (oval cells), and to inhibit tumor formation. Phosphorylates 'Ser-14' of histone H2B (H2BS14ph) during apoptosis. Phosphorylates FOXO3 upon oxidative stress, which results in its nuclear translocation and cell death initiation. Phosphorylates MOBKL1A, MOBKL1B and RASSF2. Phosphorylates TNNI3 (cardiac Tn-I) and alters its binding affinity to TNNC1 (cardiac Tn-C) and TNNT2 (cardiac Tn-T). Phosphorylates FOXO1 on 'Ser-212' and regulates its activation and stimulates transcription of PMAIP1 in a FOXO1-dependent manner. Phosphorylates SIRT1 and inhibits SIRT1-mediated p53/TP53 deacetylation, thereby promoting p53/TP53 dependent transcription and apoptosis upon DNA damage. Acts as an inhibitor of PKB/AKT1. Phosphorylates AR on 'Ser-650' and suppresses its activity by intersecting with PKB/AKT1 signaling and antagonizing formation of AR-chromatin complexes. The protein is Serine/threonine-protein kinase 4 (STK4) of Aotus nancymaae (Ma's night monkey).